Reading from the N-terminus, the 777-residue chain is MSPLLTWNLICVSSRWYTILCLKNKVKFWLGTRLVHEPESMESRSSPYIRPSPYAGGVHPHFEEEDDRSKLHASALYSERRTSSRKSLRSQKIDYHTTTIKSLWFDFCARTSSHGIPYVATSSFFGRYVWAALFMCMLMAFLLQTYWTMSEYLQYRTIIEMQLQFEAAAFPAATVCNLNAFKYSELTQYEEIKEGFDYWERVINARMMSDSMKPGGDILEAISVRKKRSKSRDQLLFPIDDEDLEGAVYQPVFVRCTCMNMEQCVPNRNPLEVNASICMCFEDVTRGLIWPCYPTSVWTVKKCSGCSISNTCPDPDGPNASKQIAKHNSPLPCLCQSISHHCMVHPKDEIRWWNPNNYTVYSVTEPPTTEITETEEAFGLSDLKDAGAITTQTKENLIFLVAALPRETRRNLSYTLNEFVLRCSFNSKDCSMERDFKLHVDPEYGNCYTFNFNDSVELKNSRAGPMYGLRLLLNVHQSDYMPTTEAAGVRLVVHEQDQEPFPDTFGYSAPTGFISSFGLKTKELHRLSAPWGNCSDTFRPVPYIYNEHYSPEGCHRNCFQLKVLEICGCGDPRFPLPSEEHRHCNAKSKIDRQCLSNLTSDSGGYHHLHEQCECRQPCHEKVFETAYSASAWPSQNFKIGTDCPAVSDIFNDTEACTEYYRQNTAYIEIYYEQLNFESLKETAGYTLVNLFSDFGGNIGLWIGFSVITFAEFAELFCEICKLMYFKGIVYVQKKMQGKEYTSSSLMHIDFLQRSPKKSQPGEDEVSTNESTKELMSK.

At 1–128 (MSPLLTWNLI…VATSSFFGRY (128 aa)) the chain is on the cytoplasmic side. Residues 129–149 (VWAALFMCMLMAFLLQTYWTM) form a helical membrane-spanning segment. Residues 150-689 (SEYLQYRTII…KETAGYTLVN (540 aa)) lie on the Extracellular side of the membrane. Residues asparagine 274, asparagine 319, asparagine 357, asparagine 411, asparagine 453, asparagine 533, and asparagine 597 are each glycosylated (N-linked (GlcNAc...) asparagine). A helical transmembrane segment spans residues 690–710 (LFSDFGGNIGLWIGFSVITFA). At 711–777 (EFAELFCEIC…NESTKELMSK (67 aa)) the chain is on the cytoplasmic side. The tract at residues 752-777 (QRSPKKSQPGEDEVSTNESTKELMSK) is disordered.

Belongs to the amiloride-sensitive sodium channel (TC 1.A.6) family.

The protein resides in the membrane. Functionally, sodium permeable non-voltage-sensitive ion channel. Involved in the activity-dependent removal of selected presynaptic proteins, such as synaptobrevin snb-1, and Ras-related rab-3, in the remodeling of GABAergic motor neurons. The sequence is that of Degenerin unc-8 from Caenorhabditis elegans.